We begin with the raw amino-acid sequence, 464 residues long: Protein ABHD18 (464 aa).

Positions 1–24 (MGVSKLDILYRRLLLTKLFIRGWG) are cleaved as a signal peptide. A glycan (N-linked (GlcNAc...) asparagine) is linked at Asn341.

Belongs to the AB hydrolase superfamily.

It is found in the secreted. The chain is Protein ABHD18 from Mus musculus (Mouse).